The chain runs to 317 residues: Transaldolase (317 aa).

The active-site Schiff-base intermediate with substrate is K126.

Belongs to the transaldolase family. Type 1 subfamily. In terms of assembly, homodimer.

The protein localises to the cytoplasm. It carries out the reaction D-sedoheptulose 7-phosphate + D-glyceraldehyde 3-phosphate = D-erythrose 4-phosphate + beta-D-fructose 6-phosphate. It functions in the pathway carbohydrate degradation; pentose phosphate pathway; D-glyceraldehyde 3-phosphate and beta-D-fructose 6-phosphate from D-ribose 5-phosphate and D-xylulose 5-phosphate (non-oxidative stage): step 2/3. Functionally, transaldolase is important for the balance of metabolites in the pentose-phosphate pathway. The sequence is that of Transaldolase from Paraburkholderia phytofirmans (strain DSM 17436 / LMG 22146 / PsJN) (Burkholderia phytofirmans).